Reading from the N-terminus, the 520-residue chain is Developmental regulatory protein wetA (520 aa).

Composition is skewed to polar residues over residues 109–118 (TATHALSISP), 155–165 (QSFSPSLMRSS), and 378–392 (SSQKFDTSYTSSQVH). Disordered regions lie at residues 109-165 (TATH…MRSS), 378-454 (SSQK…SNKS), and 468-496 (KKILTGVAPSGSSKTKARREQEARDRRRK). Basic residues predominate over residues 420–429 (PTHRRTHSRK). Residues 445–454 (SSSSRGSNKS) are compositionally biased toward low complexity.

Belongs to the wetA family.

BrlA, abaA and wetA are pivotal regulators of conidiophore development and conidium maturation. They act individually and together to regulate their own expression and that of numerous other sporulation-specific genes. The protein is Developmental regulatory protein wetA of Penicillium roqueforti (strain FM164).